The following is a 222-amino-acid chain: Cytochrome b6 (222 aa).

Residues 39–59 (IFYCLGGLTLTCFLIQFATGF) form a helical membrane-spanning segment. Heme b is bound at residue Tyr41. Position 42 (Cys42) interacts with heme c. Residues Arg90, His93, Arg94, His107, and Arg110 each contribute to the heme b site. The next 3 membrane-spanning stretches (helical) occupy residues 97–117 (ASMM…TGGF), 123–143 (LTWV…VTGY), and 193–213 (LHTF…FLMI). The heme b site is built by His194 and His209. Heme c is bound by residues Arg214 and Ile218. A heme b-binding site is contributed by Ser219.

This sequence belongs to the cytochrome b family. PetB subfamily. The 4 large subunits of the cytochrome b6-f complex are cytochrome b6, subunit IV (17 kDa polypeptide, PetD), cytochrome f and the Rieske protein, while the 4 small subunits are PetG, PetL, PetM and PetN. The complex functions as a dimer. Heme b serves as cofactor. The cofactor is heme c.

The protein resides in the cellular thylakoid membrane. In terms of biological role, component of the cytochrome b6-f complex, which mediates electron transfer between photosystem II (PSII) and photosystem I (PSI), cyclic electron flow around PSI, and state transitions. In Synechocystis sp. (strain ATCC 27184 / PCC 6803 / Kazusa), this protein is Cytochrome b6.